We begin with the raw amino-acid sequence, 335 residues long: Fructose-1,6-bisphosphatase class 1 (335 aa).

Residues Glu91, Asp113, Leu115, and Asp116 each coordinate Mg(2+). Substrate is bound by residues 116–119, Asn208, and Lys274; that span reads DGSS. Glu280 is a Mg(2+) binding site.

Belongs to the FBPase class 1 family. Homotetramer. Mg(2+) is required as a cofactor.

It is found in the cytoplasm. The enzyme catalyses beta-D-fructose 1,6-bisphosphate + H2O = beta-D-fructose 6-phosphate + phosphate. Its pathway is carbohydrate biosynthesis; gluconeogenesis. This is Fructose-1,6-bisphosphatase class 1 from Chromobacterium violaceum (strain ATCC 12472 / DSM 30191 / JCM 1249 / CCUG 213 / NBRC 12614 / NCIMB 9131 / NCTC 9757 / MK).